Reading from the N-terminus, the 66-residue chain is Large ribosomal subunit protein bL31 (66 aa).

The Zn(2+) site is built by C16, C18, C36, and C39.

The protein belongs to the bacterial ribosomal protein bL31 family. Type A subfamily. Part of the 50S ribosomal subunit. It depends on Zn(2+) as a cofactor.

Functionally, binds the 23S rRNA. The chain is Large ribosomal subunit protein bL31 from Campylobacter fetus subsp. fetus (strain 82-40).